Consider the following 422-residue polypeptide: 5-hydroxytryptamine receptor 1A (422 aa).

The interval 1 to 23 (MDVLSPGQGNNTTSPPAPFETGG) is disordered. At 1–38 (MDVLSPGQGNNTTSPPAPFETGGNTTGISDVTFSYQVI) the chain is on the extracellular side. N-linked (GlcNAc...) asparagine glycans are attached at residues Asn-10, Asn-11, and Asn-24. Residues 39–59 (TSLLLGTLIFCAVLGNACVVA) traverse the membrane as a helical segment. The Cytoplasmic segment spans residues 60-73 (AIALERSLQNVANY). A helical transmembrane segment spans residues 74 to 98 (LIGSLAVTDLMVSVLVLPMAALYQV). At 99-107 (LNKWTLGQV) the chain is on the extracellular side. A helical transmembrane segment spans residues 108-132 (TCDLFIALDVLCCTSSILHLCAIAL). Cys-109 and Cys-187 form a disulfide bridge. Positions 116 and 120 each coordinate serotonin. The short motif at 133–135 (DRY) is the DRY motif; important for ligand-induced conformation changes element. Residues 133-152 (DRYWAITDPIDYVNKRTPRR) are Cytoplasmic-facing. The chain crosses the membrane as a helical span at residues 153 to 174 (AAALISLTWLIGFLISIPPMLG). Residues 175–193 (WRTPEDRSDPDACTISKDH) are Extracellular-facing. Residues 194–216 (GYTIYSTFGAFYIPLLLMLVLYG) form a helical membrane-spanning segment. The Cytoplasmic portion of the chain corresponds to 217–346 (RIFRAARFRI…LARERKTVKT (130 aa)). The tract at residues 235-263 (KTGADTHHGASPAPQPKKSVNGESGSRNW) is disordered. 1D-myo-inositol 4-phosphate is bound by residues Thr-314, Lys-345, Thr-346, and Gly-352. Residues 347 to 370 (LGIIMGTFILCWLPFFIVALVLPF) form a helical membrane-spanning segment. The Extracellular segment spans residues 371 to 378 (CESSCHMP). A helical transmembrane segment spans residues 379–403 (TLLGAIINWLGYSNSLLNPVIYAYF). An NPxxY motif; important for ligand-induced conformation changes and signaling motif is present at residues 396-400 (NPVIY). Positions 403, 404, and 405 each coordinate 1D-myo-inositol 4-phosphate. Topologically, residues 404 to 422 (NKDFQNAFKKIIKCKFCRQ) are cytoplasmic.

It belongs to the G-protein coupled receptor 1 family. 5-hydroxytryptamine receptor subfamily. HTR1A sub-subfamily. Heterodimer; heterodimerizes with GPER1. Interacts with YIF1B. Interacts with GPR39 and GALR1.

The protein localises to the cell membrane. Its subcellular location is the cell projection. It is found in the dendrite. G-protein coupled receptor activity is regulated by lipids: phosphatidylinositol 4-phosphate increases HTR1A-mediated activity. In terms of biological role, G-protein coupled receptor for 5-hydroxytryptamine (serotonin). Also functions as a receptor for various drugs and psychoactive substances. Ligand binding causes a conformation change that triggers signaling via guanine nucleotide-binding proteins (G proteins) and modulates the activity of downstream effectors, such as adenylate cyclase. HTR1A is coupled to G(i)/G(o) G alpha proteins and mediates inhibitory neurotransmission: signaling inhibits adenylate cyclase activity and activates a phosphatidylinositol-calcium second messenger system that regulates the release of Ca(2+) ions from intracellular stores. Beta-arrestin family members regulate signaling by mediating both receptor desensitization and resensitization processes. This is 5-hydroxytryptamine receptor 1A (HTR1A) from Pongo pygmaeus (Bornean orangutan).